Reading from the N-terminus, the 178-residue chain is Crossover junction endodeoxyribonuclease RuvC (178 aa).

Catalysis depends on residues Asp-7, Glu-67, and Asp-139. Mg(2+)-binding residues include Asp-7, Glu-67, and Asp-139.

This sequence belongs to the RuvC family. In terms of assembly, homodimer which binds Holliday junction (HJ) DNA. The HJ becomes 2-fold symmetrical on binding to RuvC with unstacked arms; it has a different conformation from HJ DNA in complex with RuvA. In the full resolvosome a probable DNA-RuvA(4)-RuvB(12)-RuvC(2) complex forms which resolves the HJ. It depends on Mg(2+) as a cofactor.

The protein localises to the cytoplasm. It catalyses the reaction Endonucleolytic cleavage at a junction such as a reciprocal single-stranded crossover between two homologous DNA duplexes (Holliday junction).. Its function is as follows. The RuvA-RuvB-RuvC complex processes Holliday junction (HJ) DNA during genetic recombination and DNA repair. Endonuclease that resolves HJ intermediates. Cleaves cruciform DNA by making single-stranded nicks across the HJ at symmetrical positions within the homologous arms, yielding a 5'-phosphate and a 3'-hydroxyl group; requires a central core of homology in the junction. The consensus cleavage sequence is 5'-(A/T)TT(C/G)-3'. Cleavage occurs on the 3'-side of the TT dinucleotide at the point of strand exchange. HJ branch migration catalyzed by RuvA-RuvB allows RuvC to scan DNA until it finds its consensus sequence, where it cleaves and resolves the cruciform DNA. The protein is Crossover junction endodeoxyribonuclease RuvC of Trichlorobacter lovleyi (strain ATCC BAA-1151 / DSM 17278 / SZ) (Geobacter lovleyi).